A 274-amino-acid polypeptide reads, in one-letter code: Copper chaperone for superoxide dismutase (274 aa).

An HMA domain is found at 11–74 (VCALEFAVQM…LLESTGRQAV (64 aa)). The Cu cation site is built by Cys-22 and Cys-25. Lys-76 participates in a covalent cross-link: Glycyl lysine isopeptide (Lys-Gly) (interchain with G-Cter in ubiquitin). Residues 88-234 (AAVAILEGCG…LACGIIARSA (147 aa)) form a superoxide dismutase-like region. A disulfide bridge connects residues Cys-141 and Cys-227. His-147, His-155, His-164, and Asp-167 together coordinate Zn(2+). Glycyl lysine isopeptide (Lys-Gly) (interchain with G-Cter in ubiquitin) cross-links involve residues Lys-189, Lys-216, and Lys-241. Positions 244 and 246 each coordinate Cu cation. Ser-267 bears the Phosphoserine mark.

In the C-terminal section; belongs to the Cu-Zn superoxide dismutase family. In terms of assembly, homodimer, and heterodimer with SOD1. Interacts with COMMD1. Interacts with XIAP/BIRC4. Interacts with SLC31A1(via C-terminal domain); this interaction is Cu(1+)-mediated. The heterodimer CCS:SOD1 interacts with SLC31A1; this heterotrimer is Cu(1+)-mediated and its maintenance is regulated through SOD1 activation. Requires Cu(2+) as cofactor. It depends on Zn(2+) as a cofactor. Ubiquitinion by XIAP/BIRC4 leads to enhancement of its chaperone activity toward its physiologic target, SOD1, rather than proteasomal degradation. XIAP/BIRC4 preferentially ubiquitinates at Lys-241. As to expression, ubiquitous.

The protein resides in the cytoplasm. Its function is as follows. Delivers copper to copper zinc superoxide dismutase (SOD1). This Mus musculus (Mouse) protein is Copper chaperone for superoxide dismutase.